The primary structure comprises 447 residues: MTKVITRFAPSPTGMLHVGNIRVALLNWLYAKKHNGKFILRFDDTDLERSKQKYKNDIERDLKFLNINWDQTFNQLSRVSRYHEIKNLLINKKRLYACYETKEELELKRKLQLSKGLPPIYDRASLNLTEKQIQKYIEQGRKPHYRFFLSYEPISWFDMIKGEIKYDGKTLSDPIVIRADGSMTYMLCSVIDDIDYDITHIIRGEDHVSNTAIQIQMFEALNKIPPVFAHLSLIINKEEKISKRVGGFEIAYLKKEVGLEAMTIASFFSLLGSSLHIFPYKSIEKLVAQFEISSFSKSPTIYQQYDLERLNHKLLISLDFNEVKERLKEIDADYIDENFWLSVRPNLQKLSDIKDWWDICYQTPKIKNLNLDKEYLKQASKLLPLKITKDSWSIWTKEITNITGRKGKELFLPLRLALTGRESGPEIAGILPLIDREEIIRRLISIA.

The 'HIGH' region motif lies at 10–20 (PSPTGMLHVGN). Positions 240-244 (KISKR) match the 'KMSKS' region motif. Lys-243 contributes to the ATP binding site.

The protein belongs to the class-I aminoacyl-tRNA synthetase family. Glutamate--tRNA ligase type 1 subfamily. Monomer.

The protein localises to the cytoplasm. The enzyme catalyses tRNA(Glu) + L-glutamate + ATP = L-glutamyl-tRNA(Glu) + AMP + diphosphate. Its function is as follows. Catalyzes the attachment of glutamate to tRNA(Glu) in a two-step reaction: glutamate is first activated by ATP to form Glu-AMP and then transferred to the acceptor end of tRNA(Glu). This chain is Glutamate--tRNA ligase 1, found in Rickettsia prowazekii (strain Madrid E).